We begin with the raw amino-acid sequence, 291 residues long: GTPase Era (291 aa).

In terms of domain architecture, Era-type G spans 2-167 (KSGFVSIIGR…LDEIVKCLNE (166 aa)). The tract at residues 10-17 (GRTNAGKS) is G1. Residue 10–17 (GRTNAGKS) participates in GTP binding. A G2 region spans residues 36–40 (NATRR). Residues 57 to 60 (DTPG) are G3. Residues 57-61 (DTPGL) and 116-119 (NKVD) each bind GTP. Residues 116-119 (NKVD) form a G4 region. A G5 region spans residues 146–148 (YSS). Positions 186 to 274 (YRDFILESIY…LLKLFVTVKK (89 aa)) constitute a KH type-2 domain.

This sequence belongs to the TRAFAC class TrmE-Era-EngA-EngB-Septin-like GTPase superfamily. Era GTPase family. Monomer.

Its subcellular location is the cytoplasm. The protein resides in the cell inner membrane. Its function is as follows. An essential GTPase that binds both GDP and GTP, with rapid nucleotide exchange. Plays a role in 16S rRNA processing and 30S ribosomal subunit biogenesis and possibly also in cell cycle regulation and energy metabolism. This Campylobacter jejuni subsp. doylei (strain ATCC BAA-1458 / RM4099 / 269.97) protein is GTPase Era.